The chain runs to 477 residues: Myc-associated zinc finger protein (477 aa).

Disordered stretches follow at residues 59-78 (AQSPFQAAPAPPPTPQAPAA) and 121-144 (TVDTAALKQPPAPPPPPPAVSAPA). Residues 130-140 (PPAPPPPPPAV) show a composition bias toward pro residues. 4 consecutive C2H2-type zinc fingers follow at residues 190-212 (YICALCAKEFKNGYNLRRHEAIH), 279-301 (HACEMCGKAFRDVYHLNRHKLSH), 307-329 (YQCPVCQQRFKRKDRMSYHVRSH), and 337-360 (YNCSHCGKSFSRPDHLNSHVRQVH). Position 361 is a phosphoserine (serine 361). Residues 366 to 388 (FKCEKCEAAFATKDRLRAHTVRH) form a C2H2-type 5 zinc finger. The C2H2-type 6; atypical zinc finger occupies 392–413 (VPCHVCGKMLSSAYISDHMKVH).

Interacts with BPTF. Expressed in Purkinje cells in the brain (at protein level).

It localises to the nucleus. Transcriptional regulator. Acts as a transcriptional activator that binds to purine-rich GAGA sites found in the promoter of many genes including insulin I and II and islet amyloid polypeptide. The protein is Myc-associated zinc finger protein (Maz) of Mus musculus (Mouse).